Here is a 406-residue protein sequence, read N- to C-terminus: uncharacterized protein (406 aa).

Positions 136–153 (SQKNWGSEKNWNSPSQGP) are enriched in polar residues. The disordered stretch occupies residues 136–157 (SQKNWGSEKNWNSPSQGPASRE).

This is an uncharacterized protein from Rattus norvegicus (Rat).